The primary structure comprises 171 residues: Large ribosomal subunit protein uL10 (171 aa).

Belongs to the universal ribosomal protein uL10 family. Part of the ribosomal stalk of the 50S ribosomal subunit. The N-terminus interacts with L11 and the large rRNA to form the base of the stalk. The C-terminus forms an elongated spine to which L12 dimers bind in a sequential fashion forming a multimeric L10(L12)X complex.

Its function is as follows. Forms part of the ribosomal stalk, playing a central role in the interaction of the ribosome with GTP-bound translation factors. This chain is Large ribosomal subunit protein uL10, found in Nitrosomonas eutropha (strain DSM 101675 / C91 / Nm57).